We begin with the raw amino-acid sequence, 346 residues long: MKFSPAHYLLPLLPALVLSTRQDYEELEKQLKEVFKERSTILRQLTKTSRELDGIKVSLQSLKNDEHSAKIDVQKLLELGQKQREEMKSLQEALQNQLKETSEKAEKHQATINFLKTEVERKSKMIRDLQNENKSLKNKLLSGNKLCGIHAEESKKIQAQLKELRYGKKDLLFKAQQLTDLEQKLAVAKNELEKAALDRESQMKAMKETVQLCLTSVFRDQPPPALSLITSNPTQMLLPPRNSASKLPDAAAKSKPQQSASGNNESSQVESTKEGSPSTTACDSQDEGRTCSIKHKESPPSNATAETKPIPQKLQMPPCSECEVKKAPEKPLTSFEGMAAREEKIL.

The first 19 residues, 1-19 (MKFSPAHYLLPLLPALVLS), serve as a signal peptide directing secretion. Positions 16-211 (LVLSTRQDYE…QMKAMKETVQ (196 aa)) form a coiled coil. Asparagine 133 is a glycosylation site (N-linked (GlcNAc...) asparagine). The segment at 164–192 (LRYGKKDLLFKAQQLTDLEQKLAVAKNEL) is leucine-zipper. Residues 225–346 (ALSLITSNPT…GMAAREEKIL (122 aa)) are disordered. Residues 250–261 (AAAKSKPQQSAS) are compositionally biased toward low complexity. The span at 262–283 (GNNESSQVESTKEGSPSTTACD) shows a compositional bias: polar residues. A glycan (N-linked (GlcNAc...) asparagine) is linked at asparagine 264. Residues 286–298 (DEGRTCSIKHKES) show a composition bias toward basic and acidic residues. N-linked (GlcNAc...) asparagine glycosylation occurs at asparagine 302.

The protein resides in the secreted. The protein is Leucine zipper protein 2 (LUZP2) of Pongo abelii (Sumatran orangutan).